Here is a 355-residue protein sequence, read N- to C-terminus: Ubiquinone biosynthesis protein COQ4 homolog, mitochondrial (355 aa).

4 residues coordinate Zn(2+): His-134, Asp-135, His-138, and Glu-150.

It belongs to the COQ4 family. In terms of assembly, component of a multi-subunit COQ enzyme complex. The cofactor is Zn(2+).

The protein resides in the mitochondrion inner membrane. It carries out the reaction a 4-hydroxy-3-methoxy-5-(all-trans-polyprenyl)benzoate + H(+) = a 2-methoxy-6-(all-trans-polyprenyl)phenol + CO2. It participates in cofactor biosynthesis; ubiquinone biosynthesis. In terms of biological role, lyase that catalyzes the C1-decarboxylation of 4-hydroxy-3-methoxy-5-(all-trans-polyprenyl)benzoic acid into 2-methoxy-6-(all-trans-polyprenyl)phenol during ubiquinone biosynthesis. The protein is Ubiquinone biosynthesis protein COQ4 homolog, mitochondrial of Plasmodium falciparum (isolate 3D7).